Reading from the N-terminus, the 247-residue chain is Uridylate kinase (247 aa).

Residue 18–21 (KLSG) coordinates ATP. Glycine 60 contacts UMP. Residues glycine 61 and arginine 65 each contribute to the ATP site. Residues aspartate 80 and 141–148 (TGNPFFTT) each bind UMP. 3 residues coordinate ATP: threonine 168, tyrosine 174, and aspartate 177.

Belongs to the UMP kinase family. Homohexamer.

It localises to the cytoplasm. It catalyses the reaction UMP + ATP = UDP + ADP. It participates in pyrimidine metabolism; CTP biosynthesis via de novo pathway; UDP from UMP (UMPK route): step 1/1. Its activity is regulated as follows. Inhibited by UTP. Functionally, catalyzes the reversible phosphorylation of UMP to UDP. This is Uridylate kinase from Ectopseudomonas mendocina (strain ymp) (Pseudomonas mendocina).